The primary structure comprises 404 residues: Voltage-gated potassium channel subunit beta-3 (404 aa).

The span at 1–14 (MQVSIACTEQNLRS) shows a compositional bias: polar residues. Residues 1-77 (MQVSIACTEQ…LRESTGRGTG (77 aa)) are disordered. Gly residues predominate over residues 28–50 (PGGGNGGPAGGGHGNPPGGGGSG). Residues Thr97, Trp98, Gln104, and Asp126 each coordinate NADP(+). Tyr131 functions as the Proton donor/acceptor in the catalytic mechanism. Asn199, Ser229, Arg230, Gln255, Trp284, Pro286, Leu287, Ala288, Cys289, Lys295, Arg305, Gly364, Ser366, Gln370, and Glu373 together coordinate NADP(+).

It belongs to the shaker potassium channel beta subunit family. In terms of assembly, forms heteromultimeric complex with alpha subunits. Interacts with KCNA5 and KCNB2. Brain specific. Most prominent expression in cerebellum. Weaker signals detected in cortex, occipital lobe, frontal lobe and temporal lobe. Not detected in spinal cord, heart, lung, liver, kidney, pancreas, placenta and skeletal muscle.

The protein localises to the cytoplasm. Its function is as follows. Regulatory subunit of the voltage-gated potassium (Kv) channels composed of pore-forming and potassium-conducting alpha subunits and of regulatory beta subunit. The beta-3/KCNAB3 subunit may mediate closure of potassium channels. Increases inactivation of Kv1.5/KCNA5 alpha subunit-containing channels. May display nicotinamide adenine dinucleotide phosphate (NADPH)-dependent aldoketoreductase activity. The binding of oxidized and reduced NADP(H) cofactors may be required for the regulation of potassium channel activity. This is Voltage-gated potassium channel subunit beta-3 from Homo sapiens (Human).